The following is a 141-amino-acid chain: Hemoglobin subunit alpha (141 aa).

Residues 1 to 141 enclose the Globin domain; it reads VLSPADKTNV…VSTVLTSKYR (141 aa). Position 3 is a phosphoserine (Ser-3). Lys-7 carries the N6-succinyllysine modification. Thr-8 bears the Phosphothreonine mark. Lys-11 is modified (N6-succinyllysine). N6-acetyllysine; alternate is present on Lys-16. Lys-16 carries the post-translational modification N6-succinyllysine; alternate. Position 24 is a phosphotyrosine (Tyr-24). A Phosphoserine modification is found at Ser-35. The residue at position 40 (Lys-40) is an N6-succinyllysine. The residue at position 49 (Ser-49) is a Phosphoserine. His-58 serves as a coordination point for O2. His-87 serves as a coordination point for heme b. Residue Ser-102 is modified to Phosphoserine. Thr-108 carries the post-translational modification Phosphothreonine. At Ser-124 the chain carries Phosphoserine. Phosphothreonine occurs at positions 134 and 137. Residue Ser-138 is modified to Phosphoserine.

This sequence belongs to the globin family. Heterotetramer of two alpha chains and two beta chains. As to expression, red blood cells.

Its function is as follows. Involved in oxygen transport from the lung to the various peripheral tissues. Functionally, hemopressin acts as an antagonist peptide of the cannabinoid receptor CNR1. Hemopressin-binding efficiently blocks cannabinoid receptor CNR1 and subsequent signaling. This chain is Hemoglobin subunit alpha (HBA), found in Pteronura brasiliensis (Giant otter).